A 376-amino-acid polypeptide reads, in one-letter code: Queuine tRNA-ribosyltransferase (376 aa).

D93 functions as the Proton acceptor in the catalytic mechanism. Substrate is bound by residues 93–97, D147, Q190, and G217; that span reads DSGGF. The RNA binding stretch occupies residues 248 to 254; it reads GVGTPDD. D267 acts as the Nucleophile in catalysis. The interval 272–276 is RNA binding; important for wobble base 34 recognition; the sequence is TRAGR.

It belongs to the queuine tRNA-ribosyltransferase family. In terms of assembly, homodimer. Within each dimer, one monomer is responsible for RNA recognition and catalysis, while the other monomer binds to the replacement base PreQ1.

It catalyses the reaction 7-aminomethyl-7-carbaguanine + guanosine(34) in tRNA = 7-aminomethyl-7-carbaguanosine(34) in tRNA + guanine. The protein operates within tRNA modification; tRNA-queuosine biosynthesis. Functionally, catalyzes the base-exchange of a guanine (G) residue with the queuine precursor 7-aminomethyl-7-deazaguanine (PreQ1) at position 34 (anticodon wobble position) in tRNAs with GU(N) anticodons (tRNA-Asp, -Asn, -His and -Tyr). Catalysis occurs through a double-displacement mechanism. The nucleophile active site attacks the C1' of nucleotide 34 to detach the guanine base from the RNA, forming a covalent enzyme-RNA intermediate. The proton acceptor active site deprotonates the incoming PreQ1, allowing a nucleophilic attack on the C1' of the ribose to form the product. After dissociation, two additional enzymatic reactions on the tRNA convert PreQ1 to queuine (Q), resulting in the hypermodified nucleoside queuosine (7-(((4,5-cis-dihydroxy-2-cyclopenten-1-yl)amino)methyl)-7-deazaguanosine). In Mesorhizobium japonicum (strain LMG 29417 / CECT 9101 / MAFF 303099) (Mesorhizobium loti (strain MAFF 303099)), this protein is Queuine tRNA-ribosyltransferase.